The following is a 295-amino-acid chain: Small ribosomal subunit protein bS1 (295 aa).

S1 motif domains lie at 28-97 (GQLV…VSLR), 115-179 (GQTV…LSER), and 193-261 (GQLI…LSTK).

This sequence belongs to the bacterial ribosomal protein bS1 family.

Its function is as follows. Binds mRNA. This Synechococcus elongatus (strain ATCC 33912 / PCC 7942 / FACHB-805) (Anacystis nidulans R2) protein is Small ribosomal subunit protein bS1 (rpsA).